We begin with the raw amino-acid sequence, 662 residues long: uncharacterized protein (662 aa).

16 consecutive transmembrane segments (helical) span residues serine 10–valine 30, proline 46–isoleucine 66, alanine 68–glycine 88, glycine 101–proline 121, leucine 167–threonine 187, isoleucine 193–alanine 213, serine 217–valine 237, proline 263–leucine 283, isoleucine 285–alanine 305, methionine 312–serine 332, glutamate 342–isoleucine 362, lysine 373–proline 393, glycine 394–tryptophan 414, alanine 432–methionine 452, valine 460–isoleucine 480, and leucine 485–glycine 505.

It localises to the cell membrane. This is an uncharacterized protein from Sinorhizobium fredii (strain NBRC 101917 / NGR234).